We begin with the raw amino-acid sequence, 219 residues long: Orotate phosphoribosyltransferase (219 aa).

5-phospho-alpha-D-ribose 1-diphosphate is bound at residue K26. F34–F35 is an orotate binding site. Residues Y72–K73, R102, K103, K106, H108, and D128–A136 contribute to the 5-phospho-alpha-D-ribose 1-diphosphate site. Orotate-binding residues include T132 and R160.

The protein belongs to the purine/pyrimidine phosphoribosyltransferase family. PyrE subfamily. As to quaternary structure, homodimer.

The catalysed reaction is orotidine 5'-phosphate + diphosphate = orotate + 5-phospho-alpha-D-ribose 1-diphosphate. The protein operates within pyrimidine metabolism; UMP biosynthesis via de novo pathway; UMP from orotate: step 1/2. Its function is as follows. Catalyzes the transfer of a ribosyl phosphate group from 5-phosphoribose 1-diphosphate to orotate, leading to the formation of orotidine monophosphate (OMP). This chain is Orotate phosphoribosyltransferase (URA5), found in Yarrowia lipolytica (strain CLIB 122 / E 150) (Yeast).